The following is a 97-amino-acid chain: Putative pterin-4-alpha-carbinolamine dehydratase (97 aa).

It belongs to the pterin-4-alpha-carbinolamine dehydratase family.

It carries out the reaction (4aS,6R)-4a-hydroxy-L-erythro-5,6,7,8-tetrahydrobiopterin = (6R)-L-erythro-6,7-dihydrobiopterin + H2O. This chain is Putative pterin-4-alpha-carbinolamine dehydratase, found in Brucella abortus (strain S19).